The chain runs to 572 residues: Arginine--tRNA ligase (572 aa).

The short motif at 121 to 131 (PNLAKEMHVGH) is the 'HIGH' region element.

The protein belongs to the class-I aminoacyl-tRNA synthetase family. In terms of assembly, monomer.

It is found in the cytoplasm. The enzyme catalyses tRNA(Arg) + L-arginine + ATP = L-arginyl-tRNA(Arg) + AMP + diphosphate. The polypeptide is Arginine--tRNA ligase (Chromobacterium violaceum (strain ATCC 12472 / DSM 30191 / JCM 1249 / CCUG 213 / NBRC 12614 / NCIMB 9131 / NCTC 9757 / MK)).